We begin with the raw amino-acid sequence, 145 residues long: Large ribosomal subunit protein uL11 (145 aa).

Belongs to the universal ribosomal protein uL11 family. In terms of assembly, part of the ribosomal stalk of the 50S ribosomal subunit. Interacts with L10 and the large rRNA to form the base of the stalk. L10 forms an elongated spine to which L12 dimers bind in a sequential fashion forming a multimeric L10(L12)X complex. In terms of processing, one or more lysine residues are methylated.

Functionally, forms part of the ribosomal stalk which helps the ribosome interact with GTP-bound translation factors. The polypeptide is Large ribosomal subunit protein uL11 (Rickettsia prowazekii (strain Madrid E)).